Reading from the N-terminus, the 331-residue chain is Large ribosomal subunit protein uL3 (331 aa).

It belongs to the universal ribosomal protein uL3 family. Part of the 50S ribosomal subunit. Forms a cluster with proteins L14 and L24e.

Functionally, one of the primary rRNA binding proteins, it binds directly near the 3'-end of the 23S rRNA, where it nucleates assembly of the 50S subunit. This is Large ribosomal subunit protein uL3 from Thermoplasma acidophilum (strain ATCC 25905 / DSM 1728 / JCM 9062 / NBRC 15155 / AMRC-C165).